Consider the following 100-residue polypeptide: MNLSPREKDKLLISLAAMVARLRLARGVKLNHPEAVAIISDFIVEGARDGRSVAELMQAGAEVITRAQCMDGIPEMIHDIQVEATFPDGTKLVTVHEPIR.

It belongs to the urease gamma subunit family. In terms of assembly, heterotrimer of UreA (gamma), UreB (beta) and UreC (alpha) subunits. Three heterotrimers associate to form the active enzyme.

The protein resides in the cytoplasm. It carries out the reaction urea + 2 H2O + H(+) = hydrogencarbonate + 2 NH4(+). It participates in nitrogen metabolism; urea degradation; CO(2) and NH(3) from urea (urease route): step 1/1. This Rhodopseudomonas palustris (strain BisB18) protein is Urease subunit gamma.